A 383-amino-acid polypeptide reads, in one-letter code: Cobalt-precorrin-5B C(1)-methyltransferase (383 aa).

The protein belongs to the CbiD family.

It catalyses the reaction Co-precorrin-5B + S-adenosyl-L-methionine = Co-precorrin-6A + S-adenosyl-L-homocysteine. Its pathway is cofactor biosynthesis; adenosylcobalamin biosynthesis; cob(II)yrinate a,c-diamide from sirohydrochlorin (anaerobic route): step 6/10. Catalyzes the methylation of C-1 in cobalt-precorrin-5B to form cobalt-precorrin-6A. The polypeptide is Cobalt-precorrin-5B C(1)-methyltransferase (Prochlorococcus marinus (strain MIT 9313)).